A 145-amino-acid chain; its full sequence is Large ribosomal subunit protein uL15 (145 aa).

Residues 1-13 are compositionally biased toward basic residues; it reads MIRSKRKINKLRG. Residues 1-44 are disordered; the sequence is MIRSKRKINKLRGSRSNGGGCTKKRRGAGNKGGRGNAGASKQHW.

This sequence belongs to the universal ribosomal protein uL15 family. As to quaternary structure, part of the 50S ribosomal subunit.

Its function is as follows. Binds to the 23S rRNA. In Methanobrevibacter smithii (strain ATCC 35061 / DSM 861 / OCM 144 / PS), this protein is Large ribosomal subunit protein uL15.